The following is a 199-amino-acid chain: MVRVVLATHNRNKALEFQQILGDAVPGLQIVGYDGPEPVEDGITFEQNALIKARAAAERTGMIALADDSGICVDAMGGAPGIFSARWAGRHGDAQANLRLLLDQLADLPDSSRAAHFTATLALVTPEGETTVVEGVWPGRIAREARGGHGHGYDPIFLPDGHDVTAAELGPEAKNAESHRARAFAAIVPVLRALSRPGN.

8–13 lines the substrate pocket; the sequence is THNRNK. The Proton acceptor role is filled by aspartate 68. Aspartate 68 provides a ligand contact to Mg(2+). Substrate is bound by residues serine 69, 151–154, lysine 174, and 179–180; these read HGYD and HR.

It belongs to the HAM1 NTPase family. As to quaternary structure, homodimer. The cofactor is Mg(2+).

The catalysed reaction is XTP + H2O = XMP + diphosphate + H(+). The enzyme catalyses dITP + H2O = dIMP + diphosphate + H(+). It carries out the reaction ITP + H2O = IMP + diphosphate + H(+). Functionally, pyrophosphatase that catalyzes the hydrolysis of nucleoside triphosphates to their monophosphate derivatives, with a high preference for the non-canonical purine nucleotides XTP (xanthosine triphosphate), dITP (deoxyinosine triphosphate) and ITP. Seems to function as a house-cleaning enzyme that removes non-canonical purine nucleotides from the nucleotide pool, thus preventing their incorporation into DNA/RNA and avoiding chromosomal lesions. The protein is dITP/XTP pyrophosphatase of Leifsonia xyli subsp. xyli (strain CTCB07).